The following is a 127-amino-acid chain: Protein ApaG (127 aa).

One can recognise an ApaG domain in the interval 3–127 (ESEKYRIEVE…FMLAMPRVLH (125 aa)).

This chain is Protein ApaG, found in Aromatoleum aromaticum (strain DSM 19018 / LMG 30748 / EbN1) (Azoarcus sp. (strain EbN1)).